Reading from the N-terminus, the 554-residue chain is Valerianol synthase TPS1E (554 aa).

Mg(2+)-binding residues include Asp-307 and Asp-311. The short motif at Val-326–Asp-330 is the DDXXD motif element. Positions 452, 456, and 460 each coordinate Mg(2+).

This sequence belongs to the terpene synthase family. Requires Mg(2+) as cofactor.

The enzyme catalyses (2E,6E)-farnesyl diphosphate + H2O = valerianol + diphosphate. It participates in secondary metabolite biosynthesis; terpenoid biosynthesis. Terpene synthase that catalyzes the biosynthesis of the terpene valerianol, which is a volatile compound of floral scent. In Camellia hiemalis (Camellia), this protein is Valerianol synthase TPS1E.